Consider the following 224-residue polypeptide: Non-structural protein V (224 aa).

Residues 54–65 show a composition bias toward polar residues; the sequence is QKNIQHPTASHQ. Disordered regions lie at residues 54–96 and 150–171; these read QKNI…DPEP and TEFK…GGHR. Zn(2+) is bound by residues H170, C189, C193, C205, C207, C210, C214, and C217.

It belongs to the paramyxoviruses V protein family. In terms of assembly, interacts with host IFIH1/MDA5 and DHX58/LGP2. Forms with host DDB1, CUL4A, STAT1, STAT2 and STAT3 the mumps virus V-dependent complex (VDC).

It is found in the virion. The protein localises to the host cytoplasm. Plays an essential role in the inhibition of host immune response. Prevents the establishment of cellular antiviral state by blocking interferon-alpha/beta (IFN-alpha/beta) production and signaling pathway. Interacts with host IFIH1/MDA5 and DHX58/LGP2 to inhibit the transduction pathway involved in the activation of IFN-beta promoter, thus protecting the virus against cell antiviral state. Blocks the type I and II interferon signaling pathways by interacting with host STAT1, STAT2 and STAT3, and mediating their ubiquitination and subsequent proteasomal degradation. The sequence is that of Non-structural protein V from Mumps virus (strain SBL) (MuV).